Reading from the N-terminus, the 185-residue chain is Jasmonate-induced protein homolog (185 aa).

The protein belongs to the jasmonate-induced protein family.

This chain is Jasmonate-induced protein homolog, found in Atriplex canescens (Fourwing saltbush).